The chain runs to 85 residues: Toxin BmKITc (85 aa).

The N-terminal stretch at 1-21 is a signal peptide; it reads MKLFLLLVIFASMLNDGLVNA. One can recognise an LCN-type CS-alpha/beta domain in the interval 22–82; the sequence is DGYIRGSDGC…KWKYESNTCG (61 aa). 4 cysteine pairs are disulfide-bonded: cysteine 31/cysteine 81, cysteine 35/cysteine 56, cysteine 42/cysteine 63, and cysteine 46/cysteine 65.

This sequence belongs to the long (4 C-C) scorpion toxin superfamily. Sodium channel inhibitor family. Beta subfamily. As to expression, expressed by the venom gland.

It localises to the secreted. In terms of biological role, depressant insect beta-toxins cause a transient contraction paralysis followed by a slow flaccid paralysis. They bind voltage-independently at site-4 of sodium channels (Nav) and shift the voltage of activation toward more negative potentials thereby affecting sodium channel activation and promoting spontaneous and repetitive firing. The protein is Toxin BmKITc of Olivierus martensii (Manchurian scorpion).